A 163-amino-acid chain; its full sequence is Urease accessory protein UreE (163 aa).

It belongs to the UreE family.

The protein localises to the cytoplasm. Involved in urease metallocenter assembly. Binds nickel. Probably functions as a nickel donor during metallocenter assembly. This Actinomyces naeslundii protein is Urease accessory protein UreE.